The chain runs to 189 residues: Pyridoxal 5'-phosphate synthase subunit PdxT (189 aa).

48–50 lines the L-glutamine pocket; that stretch reads GES. C80 functions as the Nucleophile in the catalytic mechanism. L-glutamine contacts are provided by residues R107 and 136–137; that span reads IR. Residues H172 and E174 each act as charge relay system in the active site.

This sequence belongs to the glutaminase PdxT/SNO family. In the presence of PdxS, forms a dodecamer of heterodimers. Only shows activity in the heterodimer.

It carries out the reaction aldehydo-D-ribose 5-phosphate + D-glyceraldehyde 3-phosphate + L-glutamine = pyridoxal 5'-phosphate + L-glutamate + phosphate + 3 H2O + H(+). The catalysed reaction is L-glutamine + H2O = L-glutamate + NH4(+). It participates in cofactor biosynthesis; pyridoxal 5'-phosphate biosynthesis. Functionally, catalyzes the hydrolysis of glutamine to glutamate and ammonia as part of the biosynthesis of pyridoxal 5'-phosphate. The resulting ammonia molecule is channeled to the active site of PdxS. This is Pyridoxal 5'-phosphate synthase subunit PdxT from Ruminiclostridium cellulolyticum (strain ATCC 35319 / DSM 5812 / JCM 6584 / H10) (Clostridium cellulolyticum).